We begin with the raw amino-acid sequence, 550 residues long: Copine-F (550 aa).

C2 domains are found at residues 1 to 115 (MAET…RLIG) and 123 to 246 (ITGK…PIIN). The 226-residue stretch at 296 to 521 (DLMVAIDCTE…DFQNEILRKL (226 aa)) folds into the VWFA domain.

Belongs to the copine family.

In Dictyostelium discoideum (Social amoeba), this protein is Copine-F (cpnF).